We begin with the raw amino-acid sequence, 302 residues long: tRNA pseudouridine synthase B (302 aa).

Asp-45 serves as the catalytic Nucleophile.

The protein belongs to the pseudouridine synthase TruB family. Type 1 subfamily.

It catalyses the reaction uridine(55) in tRNA = pseudouridine(55) in tRNA. In terms of biological role, responsible for synthesis of pseudouridine from uracil-55 in the psi GC loop of transfer RNAs. The sequence is that of tRNA pseudouridine synthase B from Francisella tularensis subsp. holarctica (strain FTNF002-00 / FTA).